A 518-amino-acid polypeptide reads, in one-letter code: Glutamate--cysteine ligase (518 aa).

It belongs to the glutamate--cysteine ligase type 1 family. Type 1 subfamily.

The catalysed reaction is L-cysteine + L-glutamate + ATP = gamma-L-glutamyl-L-cysteine + ADP + phosphate + H(+). The protein operates within sulfur metabolism; glutathione biosynthesis; glutathione from L-cysteine and L-glutamate: step 1/2. This chain is Glutamate--cysteine ligase, found in Escherichia coli O8 (strain IAI1).